We begin with the raw amino-acid sequence, 388 residues long: Succinate--CoA ligase [ADP-forming] subunit beta (388 aa).

The 236-residue stretch at 9–244 folds into the ATP-grasp domain; that stretch reads KSLFAEYGLP…PSQDDAREAH (236 aa). Residues K46, 53 to 55, E99, T102, and E107 each bind ATP; that span reads GRG. Mg(2+) contacts are provided by N199 and D213. Substrate-binding positions include N264 and 321–323; that span reads GIV.

The protein belongs to the succinate/malate CoA ligase beta subunit family. In terms of assembly, heterotetramer of two alpha and two beta subunits. Mg(2+) serves as cofactor.

The catalysed reaction is succinate + ATP + CoA = succinyl-CoA + ADP + phosphate. It catalyses the reaction GTP + succinate + CoA = succinyl-CoA + GDP + phosphate. It participates in carbohydrate metabolism; tricarboxylic acid cycle; succinate from succinyl-CoA (ligase route): step 1/1. Its function is as follows. Succinyl-CoA synthetase functions in the citric acid cycle (TCA), coupling the hydrolysis of succinyl-CoA to the synthesis of either ATP or GTP and thus represents the only step of substrate-level phosphorylation in the TCA. The beta subunit provides nucleotide specificity of the enzyme and binds the substrate succinate, while the binding sites for coenzyme A and phosphate are found in the alpha subunit. The chain is Succinate--CoA ligase [ADP-forming] subunit beta from Shewanella sp. (strain MR-4).